Here is a 284-residue protein sequence, read N- to C-terminus: 2-dehydro-3-deoxyphosphooctonate aldolase (284 aa).

It belongs to the KdsA family.

It localises to the cytoplasm. The enzyme catalyses D-arabinose 5-phosphate + phosphoenolpyruvate + H2O = 3-deoxy-alpha-D-manno-2-octulosonate-8-phosphate + phosphate. The protein operates within carbohydrate biosynthesis; 3-deoxy-D-manno-octulosonate biosynthesis; 3-deoxy-D-manno-octulosonate from D-ribulose 5-phosphate: step 2/3. It participates in bacterial outer membrane biogenesis; lipopolysaccharide biosynthesis. This Pectobacterium atrosepticum (strain SCRI 1043 / ATCC BAA-672) (Erwinia carotovora subsp. atroseptica) protein is 2-dehydro-3-deoxyphosphooctonate aldolase.